A 462-amino-acid polypeptide reads, in one-letter code: Cysteine--tRNA ligase (462 aa).

Position 30 (cysteine 30) interacts with Zn(2+). Positions 32–42 match the 'HIGH' region motif; the sequence is MTVYDYCHIGH. Residues cysteine 214, histidine 239, and glutamate 243 each coordinate Zn(2+). The 'KMSKS' region motif lies at 271 to 275; sequence KMSKS. Lysine 274 contributes to the ATP binding site.

The protein belongs to the class-I aminoacyl-tRNA synthetase family. In terms of assembly, monomer. It depends on Zn(2+) as a cofactor.

The protein localises to the cytoplasm. The catalysed reaction is tRNA(Cys) + L-cysteine + ATP = L-cysteinyl-tRNA(Cys) + AMP + diphosphate. This is Cysteine--tRNA ligase from Herminiimonas arsenicoxydans.